We begin with the raw amino-acid sequence, 330 residues long: Protein rlx (330 aa).

Residues 220–330 (LGEDYDKGGL…EKTRGFDLEL (111 aa)) form a disordered region. 2 stretches are compositionally biased toward basic and acidic residues: residues 237-269 (NEQR…EWAR) and 279-330 (QNRE…DLEL).

Its function is as follows. This protein is probably required for relaxation complex formation and plasmid mobilization by conjugative plasmids. This chain is Protein rlx (rlx), found in Staphylococcus aureus.